The primary structure comprises 248 residues: Cyclin-Q (248 aa).

Met-1 bears the N-acetylmethionine mark. Residues 1-12 show a composition bias toward gly residues; it reads MEAPEGGGGGPA. The segment at 1 to 21 is disordered; sequence MEAPEGGGGGPAARGPEGQPA.

Belongs to the cyclin family. Cyclin-like FAM58 subfamily. Associates with CDK10 to promote its kinase activity. Interacts with SALL1.

In terms of biological role, activating cyclin for the cyclin-associated kinase CDK10. The chain is Cyclin-Q from Homo sapiens (Human).